The chain runs to 77 residues: Small ribosomal subunit protein bS20 (77 aa).

Residues Ala47 to Gly77 are disordered.

It belongs to the bacterial ribosomal protein bS20 family.

Its function is as follows. Binds directly to 16S ribosomal RNA. The chain is Small ribosomal subunit protein bS20 from Streptococcus pyogenes serotype M1.